The sequence spans 600 residues: Calcium/calmodulin-dependent serine/threonine-protein kinase 1 (600 aa).

The interval 1–99 (MGLCHGKSAA…GGFKRPFPPP (99 aa)) is disordered. Low complexity predominate over residues 24–56 (TRVAEAAAAPAKPASPAPSAAAAAAAPAKPGTP). Over residues 74-85 (YKGSPANSSVAS) the composition is skewed to polar residues. The 263-residue stretch at 147–409 (YELGREVGRG…AAQALCHPWI (263 aa)) folds into the Protein kinase domain. ATP-binding positions include 153-161 (VGRGHFGYT) and Lys-179. Asp-275 (proton acceptor) is an active-site residue.

Belongs to the protein kinase superfamily. Ser/Thr protein kinase family. In terms of processing, autophosphorylated. Highly expressed in roots in the zone of cell division. Expressed in leaf mesophyll cells and at lower levels in mature stems.

The enzyme catalyses L-seryl-[protein] + ATP = O-phospho-L-seryl-[protein] + ADP + H(+). It carries out the reaction L-threonyl-[protein] + ATP = O-phospho-L-threonyl-[protein] + ADP + H(+). With respect to regulation, activated by the binding of calmodulin-like protein 1 (CML1) in the presence of Ca(2+). Functionally, possesses kinase activity in vitro. This Oryza sativa subsp. japonica (Rice) protein is Calcium/calmodulin-dependent serine/threonine-protein kinase 1 (CAMK1).